Consider the following 240-residue polypeptide: ATP-dependent dethiobiotin synthetase BioD (240 aa).

13-18 (GVGKTI) provides a ligand contact to ATP. Threonine 17 serves as a coordination point for Mg(2+). Lysine 38 is an active-site residue. Threonine 42 is a binding site for substrate. ATP-binding positions include aspartate 55, 116 to 119 (EGVG), and 214 to 216 (PYL). Mg(2+) contacts are provided by aspartate 55 and glutamate 116.

The protein belongs to the dethiobiotin synthetase family. Homodimer. It depends on Mg(2+) as a cofactor.

It localises to the cytoplasm. The enzyme catalyses (7R,8S)-7,8-diammoniononanoate + CO2 + ATP = (4R,5S)-dethiobiotin + ADP + phosphate + 3 H(+). It functions in the pathway cofactor biosynthesis; biotin biosynthesis; biotin from 7,8-diaminononanoate: step 1/2. Functionally, catalyzes a mechanistically unusual reaction, the ATP-dependent insertion of CO2 between the N7 and N8 nitrogen atoms of 7,8-diaminopelargonic acid (DAPA, also called 7,8-diammoniononanoate) to form a ureido ring. This is ATP-dependent dethiobiotin synthetase BioD from Thermodesulfovibrio yellowstonii (strain ATCC 51303 / DSM 11347 / YP87).